A 229-amino-acid polypeptide reads, in one-letter code: MTVSLARLERQLGYTFKDQELMVLALTHRSFAGRNNERLEFLGDAILNFVAGEALFERFPQAREGQLSRLRARLVKGETLAVLARGFGLGEYLRLGSGELKSGGFRRESILADALEALIGAIYLDAGMEAAKERVTAWLTSEIESLTLVDTNKDPKTRLQEFLQSRGCELPRYEVVDIQGEPHCRVFFVECEITLLNEKSRGQGVSRRIAEQVAAAAALIALGVENGHD.

One can recognise an RNase III domain in the interval 5 to 127; the sequence is LARLERQLGY…LIGAIYLDAG (123 aa). Glutamate 40 lines the Mg(2+) pocket. The active site involves aspartate 44. Mg(2+)-binding residues include aspartate 113 and glutamate 116. Residue glutamate 116 is part of the active site. The region spanning 154-224 is the DRBM domain; that stretch reads DPKTRLQEFL…AAAALIALGV (71 aa).

Belongs to the ribonuclease III family. As to quaternary structure, homodimer. It depends on Mg(2+) as a cofactor.

It localises to the cytoplasm. The catalysed reaction is Endonucleolytic cleavage to 5'-phosphomonoester.. Its function is as follows. Digests double-stranded RNA. Involved in the processing of primary rRNA transcript to yield the immediate precursors to the large and small rRNAs (23S and 16S). Processes some mRNAs, and tRNAs when they are encoded in the rRNA operon. Processes pre-crRNA and tracrRNA of type II CRISPR loci if present in the organism. This is Ribonuclease 3 from Pseudomonas fluorescens (strain SBW25).